The primary structure comprises 408 residues: Menaquinone reductase (408 aa).

FAD is bound by residues 13–17 (GAGPA), 46–49 (CGDG), Arg103, Ala127, Asp290, and 302–303 (GI).

This sequence belongs to the geranylgeranyl reductase family. It depends on FAD as a cofactor.

The catalysed reaction is menaquinone-9 + AH2 = beta-dihydromenaquinone-9 + A. Its pathway is quinol/quinone metabolism; menaquinone biosynthesis. Catalyzes the reduction of a single double bond in the isoprenoid tail of menaquinone (MK-9) in M.tuberculosis, likely the beta-isoprene unit, forming the predominant form of menaquinone found in mycobacteria, MK-9(II-H2). The sequence is that of Menaquinone reductase from Mycobacterium tuberculosis (strain CDC 1551 / Oshkosh).